Consider the following 262-residue polypeptide: Protein CUSTOS (262 aa).

Disordered regions lie at residues 1-79 (MAAP…LQTT) and 126-262 (FTSV…IPAN). Over residues 9-18 (SDSESSNSSS) the composition is skewed to low complexity. The span at 51–61 (ANSQLSTSQPS) shows a compositional bias: polar residues. At serine 61 the chain carries Phosphoserine. The residue at position 79 (threonine 79) is a Phosphothreonine. Serine 138 carries the phosphoserine modification. A Phosphothreonine modification is found at threonine 182. The segment covering 188-199 (KKKRKLKKKAKK) has biased composition (basic residues). The span at 200 to 209 (VASVDSAVAA) shows a compositional bias: low complexity. The segment covering 210–221 (TTPTSMATVQKQ) has biased composition (polar residues). Threonine 211 carries the phosphothreonine modification. The Nucleolar localization signal (NLS) signature appears at 236–241 (KKKKKA).

Belongs to the CUSTOS family.

The protein resides in the nucleus envelope. Its function is as follows. Plays a role in the regulation of Wnt signaling pathway during early development. This chain is Protein CUSTOS, found in Homo sapiens (Human).